The following is a 309-amino-acid chain: UPF0276 protein RB0508 (309 aa).

This sequence belongs to the UPF0276 family.

In Rhizobium meliloti (strain 1021) (Ensifer meliloti), this protein is UPF0276 protein RB0508.